A 330-amino-acid polypeptide reads, in one-letter code: Phosphate acyltransferase (330 aa).

Belongs to the PlsX family. In terms of assembly, homodimer. Probably interacts with PlsY.

The protein resides in the cytoplasm. The catalysed reaction is a fatty acyl-[ACP] + phosphate = an acyl phosphate + holo-[ACP]. It functions in the pathway lipid metabolism; phospholipid metabolism. Its function is as follows. Catalyzes the reversible formation of acyl-phosphate (acyl-PO(4)) from acyl-[acyl-carrier-protein] (acyl-ACP). This enzyme utilizes acyl-ACP as fatty acyl donor, but not acyl-CoA. The chain is Phosphate acyltransferase from Lactobacillus delbrueckii subsp. bulgaricus (strain ATCC 11842 / DSM 20081 / BCRC 10696 / JCM 1002 / NBRC 13953 / NCIMB 11778 / NCTC 12712 / WDCM 00102 / Lb 14).